The chain runs to 347 residues: GMP reductase (347 aa).

108 to 131 (ADFQKTKDIMALTDDLIFICVDIA) contributes to the NADP(+) binding site. K(+) contacts are provided by Gly-181 and Gly-183. Cys-186 functions as the Thioimidate intermediate in the catalytic mechanism. Residue 216–239 (IIGDGGCSCAGDVSKAFGGGADFV) coordinates NADP(+).

It belongs to the IMPDH/GMPR family. GuaC type 1 subfamily. Homotetramer.

The catalysed reaction is IMP + NH4(+) + NADP(+) = GMP + NADPH + 2 H(+). Catalyzes the irreversible NADPH-dependent deamination of GMP to IMP. It functions in the conversion of nucleobase, nucleoside and nucleotide derivatives of G to A nucleotides, and in maintaining the intracellular balance of A and G nucleotides. This is GMP reductase from Aliivibrio salmonicida (strain LFI1238) (Vibrio salmonicida (strain LFI1238)).